The following is a 106-amino-acid chain: Large ribosomal subunit protein uL24 (106 aa).

This sequence belongs to the universal ribosomal protein uL24 family. Part of the 50S ribosomal subunit.

In terms of biological role, one of two assembly initiator proteins, it binds directly to the 5'-end of the 23S rRNA, where it nucleates assembly of the 50S subunit. Its function is as follows. One of the proteins that surrounds the polypeptide exit tunnel on the outside of the subunit. In Verminephrobacter eiseniae (strain EF01-2), this protein is Large ribosomal subunit protein uL24.